The chain runs to 80 residues: Exodeoxyribonuclease 7 small subunit (80 aa).

The disordered stretch occupies residues 60–80 (LIDSDGTEHNLDPNNASAPEE). The segment covering 61-70 (IDSDGTEHNL) has biased composition (basic and acidic residues). Positions 71–80 (DPNNASAPEE) are enriched in polar residues.

The protein belongs to the XseB family. As to quaternary structure, heterooligomer composed of large and small subunits.

Its subcellular location is the cytoplasm. The enzyme catalyses Exonucleolytic cleavage in either 5'- to 3'- or 3'- to 5'-direction to yield nucleoside 5'-phosphates.. Its function is as follows. Bidirectionally degrades single-stranded DNA into large acid-insoluble oligonucleotides, which are then degraded further into small acid-soluble oligonucleotides. In Lactobacillus acidophilus (strain ATCC 700396 / NCK56 / N2 / NCFM), this protein is Exodeoxyribonuclease 7 small subunit.